Consider the following 245-residue polypeptide: 1-(5-phosphoribosyl)-5-[(5-phosphoribosylamino)methylideneamino] imidazole-4-carboxamide isomerase (245 aa).

Asp7 serves as the catalytic Proton acceptor. Asp129 functions as the Proton donor in the catalytic mechanism.

The protein belongs to the HisA/HisF family.

It is found in the cytoplasm. It catalyses the reaction 1-(5-phospho-beta-D-ribosyl)-5-[(5-phospho-beta-D-ribosylamino)methylideneamino]imidazole-4-carboxamide = 5-[(5-phospho-1-deoxy-D-ribulos-1-ylimino)methylamino]-1-(5-phospho-beta-D-ribosyl)imidazole-4-carboxamide. It functions in the pathway amino-acid biosynthesis; L-histidine biosynthesis; L-histidine from 5-phospho-alpha-D-ribose 1-diphosphate: step 4/9. This is 1-(5-phosphoribosyl)-5-[(5-phosphoribosylamino)methylideneamino] imidazole-4-carboxamide isomerase from Shewanella putrefaciens (strain CN-32 / ATCC BAA-453).